Here is a 188-residue protein sequence, read N- to C-terminus: NANOG neighbor homeobox (188 aa).

Positions 28–106 (ETILANKKQS…NEKQKQYPEK (79 aa)) are disordered. Residues 57 to 106 (QNGKQKWREEGEAGRKREREKEEKNEKELQDEQENKRKRENEKQKQYPEK) show a composition bias toward basic and acidic residues. The homeobox DNA-binding region spans 102–161 (QYPEKRLVSKSLMHTLWAKFKLNRCPTIQESLSLSFEFDMTHKQISQWFCKTRKKYNKEM).

It localises to the nucleus. The protein is NANOG neighbor homeobox (NANOGNB) of Homo sapiens (Human).